The chain runs to 94 residues: Co-chaperonin GroES (94 aa).

This sequence belongs to the GroES chaperonin family. Heptamer of 7 subunits arranged in a ring. Interacts with the chaperonin GroEL.

The protein localises to the cytoplasm. Functionally, together with the chaperonin GroEL, plays an essential role in assisting protein folding. The GroEL-GroES system forms a nano-cage that allows encapsulation of the non-native substrate proteins and provides a physical environment optimized to promote and accelerate protein folding. GroES binds to the apical surface of the GroEL ring, thereby capping the opening of the GroEL channel. This Ehrlichia chaffeensis protein is Co-chaperonin GroES.